The chain runs to 149 residues: 3-dehydroquinate dehydratase (149 aa).

Tyr-22 serves as the catalytic Proton acceptor. Asn-74, His-80, and Asp-87 together coordinate substrate. His-100 (proton donor) is an active-site residue. Residues Met-101–Ser-102 and Arg-111 each bind substrate.

Belongs to the type-II 3-dehydroquinase family. Homododecamer.

It catalyses the reaction 3-dehydroquinate = 3-dehydroshikimate + H2O. The protein operates within metabolic intermediate biosynthesis; chorismate biosynthesis; chorismate from D-erythrose 4-phosphate and phosphoenolpyruvate: step 3/7. In terms of biological role, catalyzes a trans-dehydration via an enolate intermediate. This Leptothrix cholodnii (strain ATCC 51168 / LMG 8142 / SP-6) (Leptothrix discophora (strain SP-6)) protein is 3-dehydroquinate dehydratase.